A 272-amino-acid polypeptide reads, in one-letter code: Adenylate kinase (272 aa).

55–60 (GAGKGT) provides a ligand contact to ATP. The segment at 75–104 (ATGDMLRSQVAKKTPLGKEAKKIMDQGGLV) is NMP. Residues Thr76, Arg81, 102-104 (GLV), 131-134 (GFPR), and Gln138 each bind AMP. An LID region spans residues 172 to 209 (GRLVHPASGRSYHKIFNPPKQDMKDDITGEPLIQRSDD). Residues Arg173 and 182–183 (SY) contribute to the ATP site. Arg206 and Arg217 together coordinate AMP. Residue Gln245 participates in ATP binding.

It belongs to the adenylate kinase family. AK2 subfamily. Monomer.

It is found in the cytoplasm. Its subcellular location is the cytosol. The protein localises to the mitochondrion intermembrane space. The catalysed reaction is AMP + ATP = 2 ADP. Its function is as follows. Catalyzes the reversible transfer of the terminal phosphate group between ATP and AMP. Plays an important role in cellular energy homeostasis and in adenine nucleotide metabolism. Adenylate kinase activity is critical for regulation of the phosphate utilization and the AMP de novo biosynthesis pathways. The protein is Adenylate kinase (adk1) of Talaromyces marneffei (Penicillium marneffei).